The chain runs to 66 residues: Period circadian protein (66 aa).

The disordered stretch occupies residues Glu-1 to Lys-66. Residues Ser-9–Thr-31 are compositionally biased toward low complexity. Tandem repeats lie at residues Gly-30 to Thr-31, Gly-32 to Thr-33, Gly-35 to Thr-36, and Gly-37 to Asn-38. Positions Gly-30–Ala-53 are 4 X 2 AA tandem repeats of G-[TN]. A compositionally biased stretch (gly residues) spans Gly-32–Ser-51.

Forms a heterodimer with timeless (TIM); the complex then translocates into the nucleus. Phosphorylated with a circadian rhythmicity, probably by the double-time protein (dbt). Phosphorylation could be implicated in the stability of per monomer and in the formation of heterodimer per-tim.

The protein resides in the nucleus. It is found in the cytoplasm. It localises to the perinuclear region. In terms of biological role, essential for biological clock functions. Determines the period length of circadian and ultradian rhythms; an increase in PER dosage leads to shortened circadian rhythms and a decrease leads to lengthened circadian rhythms. Essential for the circadian rhythmicity of locomotor activity, eclosion behavior, and for the rhythmic component of the male courtship song that originates in the thoracic nervous system. The biological cycle depends on the rhythmic formation and nuclear localization of the TIM-PER complex. Light induces the degradation of TIM, which promotes elimination of PER. Nuclear activity of the heterodimer coordinatively regulates PER and TIM transcription through a negative feedback loop. Behaves as a negative element in circadian transcriptional loop. Does not appear to bind DNA, suggesting indirect transcriptional inhibition. In Drosophila saltans (Fruit fly), this protein is Period circadian protein (per).